Here is an 852-residue protein sequence, read N- to C-terminus: Elongation factor 2 (852 aa).

A tr-type G domain is found at 17 to 356 (RNIRNMSVIA…MIAFHLPSPV (340 aa)). 26 to 33 (AHVDHGKS) is a GTP binding site. Phosphothreonine occurs at positions 57 and 59. Residues 170–173 (NKMD) and 227–229 (SGL) contribute to the GTP site. Residue histidine 709 is modified to Diphthamide.

This sequence belongs to the TRAFAC class translation factor GTPase superfamily. Classic translation factor GTPase family. EF-G/EF-2 subfamily. Phosphorylation by EF-2 kinase completely inactivates EF-2. In terms of processing, AMPylated by fic-1.

The protein localises to the cytoplasm. It catalyses the reaction GTP + H2O = GDP + phosphate + H(+). In terms of biological role, catalyzes the GTP-dependent ribosomal translocation step during translation elongation. During this step, the ribosome changes from the pre-translocational (PRE) to the post-translocational (POST) state as the newly formed A-site-bound peptidyl-tRNA and P-site-bound deacylated tRNA move to the P and E sites, respectively. Catalyzes the coordinated movement of the two tRNA molecules, the mRNA and conformational changes in the ribosome. Involved in the morphogenesis of epidermal tissues. This Caenorhabditis elegans protein is Elongation factor 2 (eef-2).